A 62-amino-acid polypeptide reads, in one-letter code: Large ribosomal subunit protein uL30 (62 aa).

This sequence belongs to the universal ribosomal protein uL30 family. As to quaternary structure, part of the 50S ribosomal subunit.

The polypeptide is Large ribosomal subunit protein uL30 (Marinobacter nauticus (strain ATCC 700491 / DSM 11845 / VT8) (Marinobacter aquaeolei)).